An 83-amino-acid chain; its full sequence is Sulfur carrier protein TusA (83 aa).

Catalysis depends on Cys20, which acts as the Cysteine persulfide intermediate.

This sequence belongs to the sulfur carrier protein TusA family.

It localises to the cytoplasm. Its function is as follows. Sulfur carrier protein which probably makes part of a sulfur-relay system. This chain is Sulfur carrier protein TusA, found in Pseudoalteromonas atlantica (strain T6c / ATCC BAA-1087).